The chain runs to 320 residues: SUN domain-containing protein 3 (320 aa).

At 1-6 (MLTRSW) the chain is on the nuclear side. A helical membrane pass occupies residues 7–29 (KIILSTVFISTFLLVGLLNHQWL). Residues 30–320 (KETEFPQKPR…RVHGIPSDYT (291 aa)) lie on the Perinuclear space side of the membrane. Residues 63–102 (KEQQELLKKESQTLENNFREILFLIEQIDVLKALLKDMKD) adopt a coiled-coil conformation. An SUN domain is found at 156–317 (GASVIEAGTS…YRFRVHGIPS (162 aa)).

In terms of assembly, self-associates. Interacts with SYNE1 and SPAG4/SUN4. Proposed to form a spermatogenesis-specific LINC complex with SYNE1 during sperm head formation possibly implicating a SUN domain-based heterotrimer with SPAG4/SUN4 associating with SYNE1. Can interact with SYNE3; the interaction is questioned by missing colocalization in spermatids. In terms of tissue distribution, specifically expressed in testis (at protein level).

It localises to the membrane. The protein localises to the nucleus envelope. The protein resides in the nucleus inner membrane. Its function is as follows. As a probable component of the LINC (LInker of Nucleoskeleton and Cytoskeleton) complex, involved in the connection between the nuclear lamina and the cytoskeleton. The nucleocytoplasmic interactions established by the LINC complex play an important role in the transmission of mechanical forces across the nuclear envelope and in nuclear movement and positioning. May be involved in nuclear remodeling during sperm head formation in spermatogenesis. A probable SUN3:SYNE1 LINC complex may tether spermatid nuclei to posterior cytoskeletal structures such as the manchette. The chain is SUN domain-containing protein 3 (Sun3) from Mus musculus (Mouse).